The following is a 332-amino-acid chain: Iron-utilization periplasmic protein (332 aa).

The signal sequence occupies residues 1–23 (MQFKHFKLATLAAALAFSANSFA). 4 residues coordinate Fe cation: H32, E80, Y218, and Y219.

It belongs to the bacterial solute-binding protein 1 family. In terms of assembly, the complex is composed of two ATP-binding proteins (FbpC), two transmembrane proteins (FbpB) and a solute-binding protein (FbpA).

Its subcellular location is the periplasm. Functionally, part of the ABC transporter complex FbpABC (TC 3.A.1.10.1) involved in Fe(3+) ions import. This protein specifically binds Fe(3+) and is involved in its transmembrane transport. This is Iron-utilization periplasmic protein (fbpA) from Haemophilus influenzae (strain ATCC 51907 / DSM 11121 / KW20 / Rd).